The following is a 166-amino-acid chain: Anterior gradient protein 3 (166 aa).

The N-terminal stretch at 1 to 21 (MMLHSALGLCLLLVTVSSNLA) is a signal peptide. The Prevents secretion from ER signature appears at 163–166 (QSEL).

This sequence belongs to the AGR family. As to quaternary structure, interacts with LYPD3 and DAG1 (alphaDAG1). Expressed in the lung, in the ciliated cells of the airway epithelium. Expression increased with differentiation of airway epithelial cells. Not detected in the mucous cells. Expressed in ciliated cells in the oviduct. Also detected in stomach, colon, prostate and liver. Expressed in breast, ovary, prostate and liver cancer. Expression is associated with the level of differentiation of breast cancer (at protein level).

It localises to the endoplasmic reticulum. Functionally, required for calcium-mediated regulation of ciliary beat frequency and mucociliary clearance in the airway. Might be involved in the regulation of intracellular calcium in tracheal epithelial cells. This chain is Anterior gradient protein 3 (AGR3), found in Homo sapiens (Human).